The primary structure comprises 601 residues: Proline--tRNA ligase (601 aa).

This sequence belongs to the class-II aminoacyl-tRNA synthetase family. ProS type 1 subfamily. As to quaternary structure, homodimer.

Its subcellular location is the cytoplasm. The catalysed reaction is tRNA(Pro) + L-proline + ATP = L-prolyl-tRNA(Pro) + AMP + diphosphate. Catalyzes the attachment of proline to tRNA(Pro) in a two-step reaction: proline is first activated by ATP to form Pro-AMP and then transferred to the acceptor end of tRNA(Pro). As ProRS can inadvertently accommodate and process non-cognate amino acids such as alanine and cysteine, to avoid such errors it has two additional distinct editing activities against alanine. One activity is designated as 'pretransfer' editing and involves the tRNA(Pro)-independent hydrolysis of activated Ala-AMP. The other activity is designated 'posttransfer' editing and involves deacylation of mischarged Ala-tRNA(Pro). The misacylated Cys-tRNA(Pro) is not edited by ProRS. The polypeptide is Proline--tRNA ligase (Picosynechococcus sp. (strain ATCC 27264 / PCC 7002 / PR-6) (Agmenellum quadruplicatum)).